Here is a 208-residue protein sequence, read N- to C-terminus: Recombination protein RecR (208 aa).

The C4-type zinc finger occupies 57–72 (CALCNTLTEQEVCVTC). Residues 80–187 (SKLCVVETPA…QVTRLARGVP (108 aa)) form the Toprim domain.

This sequence belongs to the RecR family.

Its function is as follows. May play a role in DNA repair. It seems to be involved in an RecBC-independent recombinational process of DNA repair. It may act with RecF and RecO. The polypeptide is Recombination protein RecR (Polaromonas naphthalenivorans (strain CJ2)).